We begin with the raw amino-acid sequence, 495 residues long: Glycogen synthase (495 aa).

Residue K24 participates in ADP-alpha-D-glucose binding.

It belongs to the glycosyltransferase 1 family. Bacterial/plant glycogen synthase subfamily.

It catalyses the reaction [(1-&gt;4)-alpha-D-glucosyl](n) + ADP-alpha-D-glucose = [(1-&gt;4)-alpha-D-glucosyl](n+1) + ADP + H(+). Its pathway is glycan biosynthesis; glycogen biosynthesis. Its function is as follows. Synthesizes alpha-1,4-glucan chains using ADP-glucose. The polypeptide is Glycogen synthase (Nitrosomonas europaea (strain ATCC 19718 / CIP 103999 / KCTC 2705 / NBRC 14298)).